A 459-amino-acid chain; its full sequence is Zinc finger protein 213 (459 aa).

The 82-residue stretch at 45–126 (RQRFRQFCYG…VALVEDLQKQ (82 aa)) folds into the SCAN box domain. The interval 128–188 (VKAWRQDVPS…ALLKEGRPGE (61 aa)) is disordered. A KRAB domain is found at 202–292 (VALGDIPFYF…ENRPRAALGP (91 aa)). 5 consecutive C2H2-type zinc fingers follow at residues 317 to 339 (HSCGQCGKRFRWGSDLARHQRTH), 345 to 367 (HKCPECDKSFRSSSDLVRHQGVH), 373 to 395 (FSCSECGKSFSRSAYLADHQRIH), 401 to 423 (FGCSDCGKSFSLRSYLLDHRRVH), and 429 to 451 (FGCGECDKSFKQRAHLIAHQSLH).

It belongs to the krueppel C2H2-type zinc-finger protein family. As to expression, widely expressed with highest levels in testis.

It localises to the nucleus. Its function is as follows. May be involved in transcriptional regulation. This Homo sapiens (Human) protein is Zinc finger protein 213 (ZNF213).